The chain runs to 664 residues: Methionine--tRNA ligase (664 aa).

The 'HIGH' region signature appears at 13–23; the sequence is PYTNGPCHIGH. Cys144, Cys147, Cys156, and Cys160 together coordinate Zn(2+). Residues 327–331 carry the 'KMSKS' region motif; it reads KFSKS. Lys330 lines the ATP pocket. A tRNA-binding domain is found at 566 to 664; it reads EFGNLDIRIA…RPVKPGTKIR (99 aa).

This sequence belongs to the class-I aminoacyl-tRNA synthetase family. MetG type 1 subfamily. In terms of assembly, homodimer. Zn(2+) is required as a cofactor.

The protein resides in the cytoplasm. The enzyme catalyses tRNA(Met) + L-methionine + ATP = L-methionyl-tRNA(Met) + AMP + diphosphate. In terms of biological role, is required not only for elongation of protein synthesis but also for the initiation of all mRNA translation through initiator tRNA(fMet) aminoacylation. This Methanoculleus marisnigri (strain ATCC 35101 / DSM 1498 / JR1) protein is Methionine--tRNA ligase.